Consider the following 125-residue polypeptide: uncharacterized protein (125 aa).

Residues 96–113 traverse the membrane as a helical segment; the sequence is LFMMSIVSSYVCYITVLL.

The protein resides in the membrane. This is an uncharacterized protein from Saccharomyces cerevisiae (strain ATCC 204508 / S288c) (Baker's yeast).